We begin with the raw amino-acid sequence, 235 residues long: Phosphoribosylaminoimidazole-succinocarboxamide synthase (235 aa).

This sequence belongs to the SAICAR synthetase family.

The catalysed reaction is 5-amino-1-(5-phospho-D-ribosyl)imidazole-4-carboxylate + L-aspartate + ATP = (2S)-2-[5-amino-1-(5-phospho-beta-D-ribosyl)imidazole-4-carboxamido]succinate + ADP + phosphate + 2 H(+). It functions in the pathway purine metabolism; IMP biosynthesis via de novo pathway; 5-amino-1-(5-phospho-D-ribosyl)imidazole-4-carboxamide from 5-amino-1-(5-phospho-D-ribosyl)imidazole-4-carboxylate: step 1/2. This is Phosphoribosylaminoimidazole-succinocarboxamide synthase from Streptococcus pneumoniae serotype 2 (strain D39 / NCTC 7466).